A 362-amino-acid polypeptide reads, in one-letter code: Methylthioribose-1-phosphate isomerase (362 aa).

Substrate contacts are provided by residues 53–55, Arg90, and Gln201; that span reads RGA. Residue Asp241 is the Proton donor of the active site. 251–252 provides a ligand contact to substrate; sequence NK.

It belongs to the eIF-2B alpha/beta/delta subunits family. MtnA subfamily.

The catalysed reaction is 5-(methylsulfanyl)-alpha-D-ribose 1-phosphate = 5-(methylsulfanyl)-D-ribulose 1-phosphate. The protein operates within amino-acid biosynthesis; L-methionine biosynthesis via salvage pathway; L-methionine from S-methyl-5-thio-alpha-D-ribose 1-phosphate: step 1/6. Catalyzes the interconversion of methylthioribose-1-phosphate (MTR-1-P) into methylthioribulose-1-phosphate (MTRu-1-P). In Dechloromonas aromatica (strain RCB), this protein is Methylthioribose-1-phosphate isomerase.